A 542-amino-acid polypeptide reads, in one-letter code: Malolactic enzyme (542 aa).

Tyrosine 92 (proton donor) is an active-site residue. Lysine 165 (proton acceptor) is an active-site residue. Lysine 165 provides a ligand contact to substrate. Residues glutamate 236, aspartate 237, and aspartate 260 each contribute to the Mn(2+) site. NAD(+) contacts are provided by residues 293–296 (AGTA), asparagine 405, and asparagine 450. Asparagine 450 contributes to the substrate binding site.

This sequence belongs to the malic enzymes family. Homodimer. Mn(2+) serves as cofactor. Requires NAD(+) as cofactor.

The catalysed reaction is (S)-malate + H(+) = (S)-lactate + CO2. Oxamate, fructose-1,6-diphosphate and L-lactate act as non-competitive inhibitors, whereas succinate, citrate and tartrate isomers produce a competitive inhibition. Involved in the malolactic fermentation (MLF) of wine, which results in a natural decrease in acidity and favorable changes in wine flavors. Catalyzes the decarboxylation of L-malate to L-lactate. This Leuconostoc mesenteroides protein is Malolactic enzyme (mleS).